The following is a 144-amino-acid chain: Large ribosomal subunit protein uL15 (144 aa).

The segment at 1 to 57 is disordered; the sequence is MLLNTLSPAAGSKHAPKRLGRGVGSGLGKTGGRGHKGQKSRSGGKVRPGFEGGQMPL. Over residues 21-31 the composition is skewed to gly residues; the sequence is RGVGSGLGKTG. Over residues 32–44 the composition is skewed to basic residues; it reads GRGHKGQKSRSGG.

The protein belongs to the universal ribosomal protein uL15 family. As to quaternary structure, part of the 50S ribosomal subunit.

Its function is as follows. Binds to the 23S rRNA. The sequence is that of Large ribosomal subunit protein uL15 from Vibrio cholerae serotype O1 (strain ATCC 39315 / El Tor Inaba N16961).